Reading from the N-terminus, the 409-residue chain is 23S rRNA (uracil(747)-C(5))-methyltransferase (409 aa).

Positions 61, 67, 70, and 137 each coordinate [4Fe-4S] cluster. Residues Gln251, Tyr277, Glu298, and Asp339 each contribute to the S-adenosyl-L-methionine site. The Nucleophile role is filled by Cys365.

Belongs to the class I-like SAM-binding methyltransferase superfamily. RNA M5U methyltransferase family.

The enzyme catalyses uridine(747) in 23S rRNA + S-adenosyl-L-methionine = 5-methyluridine(747) in 23S rRNA + S-adenosyl-L-homocysteine + H(+). Its function is as follows. Catalyzes the formation of 5-methyl-uridine at position equivalent to 747 (m5U747) in 23S rRNA. In Pyrococcus furiosus (strain ATCC 43587 / DSM 3638 / JCM 8422 / Vc1), this protein is 23S rRNA (uracil(747)-C(5))-methyltransferase.